A 95-amino-acid polypeptide reads, in one-letter code: Acylphosphatase (95 aa).

One can recognise an Acylphosphatase-like domain in the interval 6-94; that stretch reads RVRVIVKGIV…EDFTGFSVRY (89 aa). Active-site residues include arginine 21 and asparagine 39.

The protein belongs to the acylphosphatase family.

It catalyses the reaction an acyl phosphate + H2O = a carboxylate + phosphate + H(+). The sequence is that of Acylphosphatase (acyP) from Caldivirga maquilingensis (strain ATCC 700844 / DSM 13496 / JCM 10307 / IC-167).